The following is an 833-amino-acid chain: AdoMet-dependent rRNA methyltransferase SPB1 (833 aa).

S-adenosyl-L-methionine is bound by residues G59, W61, D79, D95, and D120. The active-site Proton acceptor is the K160. Coiled-coil stretches lie at residues 348 to 389 (EEEQ…QLNM) and 453 to 481 (RDEL…SERD). Over residues 477 to 493 (KSERDAKFRAKQARESS) the composition is skewed to basic and acidic residues. 3 disordered regions span residues 477-532 (KSER…SDDD), 592-645 (KRKL…EKHS), and 776-810 (VTKK…GKYK). Composition is skewed to acidic residues over residues 505–532 (QSDE…SDDD) and 622–634 (EDGD…DSEE). The span at 635–645 (EAKRTKQEKHS) shows a compositional bias: basic and acidic residues. Residues 730–782 (AEAKARKKHRAVARLEKLKKKAGLINDDSDKSEKDKAEEIAKLMRKVTKKAKQ) are a coiled coil.

It belongs to the class I-like SAM-binding methyltransferase superfamily. RNA methyltransferase RlmE family. SPB1 subfamily. Component of the nucleolar and nucleoplasmic pre-60S ribosomal particle.

Its subcellular location is the nucleus. The protein localises to the nucleolus. It catalyses the reaction a ribonucleotide in rRNA + S-adenosyl-L-methionine = a 2'-O-methylribonucleotide in rRNA + S-adenosyl-L-homocysteine + H(+). Required for proper assembly of pre-ribosomal particles during the biogenesis of the 60S ribosomal subunit. In Kluyveromyces lactis (strain ATCC 8585 / CBS 2359 / DSM 70799 / NBRC 1267 / NRRL Y-1140 / WM37) (Yeast), this protein is AdoMet-dependent rRNA methyltransferase SPB1.